We begin with the raw amino-acid sequence, 278 residues long: OX-2 membrane glycoprotein (278 aa).

The signal sequence occupies residues 1-30 (MERLVIRMPFSHLSTYSLVWVMAAVVLCTA). Residues 31–141 (QVQVVTQDER…SGTACLTVYV (111 aa)) enclose the Ig-like V-type domain. At 31 to 232 (QVQVVTQDER…TDFKQTVNKG (202 aa)) the chain is on the extracellular side. Disulfide bonds link C51–C121 and C118–C136. 3 N-linked (GlcNAc...) asparagine glycosylation sites follow: N95, N103, and N110. Residues 142–232 (QPIVSLHYKF…TDFKQTVNKG (91 aa)) form the Ig-like C2-type domain. N157, N181, and N190 each carry an N-linked (GlcNAc...) asparagine glycan. A disulfide bond links C160 and C214. A helical membrane pass occupies residues 233 to 259 (YWFSVPLLLSIVSLVILLVLISILLYW). Residues 260–278 (KRHRNQDRGELSQGVQKMT) are Cytoplasmic-facing.

As to quaternary structure, CD200 and CD200R1 interact via their respective N-terminal Ig-like domains.

The protein resides in the cell membrane. Costimulates T-cell proliferation. May regulate myeloid cell activity in a variety of tissues. The sequence is that of OX-2 membrane glycoprotein (CD200) from Homo sapiens (Human).